The chain runs to 168 residues: MMVLGRIVAPFGVQGWLKIHPFGDDPAAWRKMTHWWLAEDPDGPESAWVQYKLASCRPHGKGLVALLEGVPDRNAAEAIEGRYVGAPRDAMPAPEKDEYYWGDLVGLDVVNETDETLGRVSGLISTGAHDVLQVEDGETERLIPFVAAYVLDVDLAARRIRVAWQKDW.

Positions 96–168 (KDEYYWGDLV…RIRVAWQKDW (73 aa)) constitute a PRC barrel domain.

Belongs to the RimM family. As to quaternary structure, binds ribosomal protein uS19.

It is found in the cytoplasm. Functionally, an accessory protein needed during the final step in the assembly of 30S ribosomal subunit, possibly for assembly of the head region. Essential for efficient processing of 16S rRNA. May be needed both before and after RbfA during the maturation of 16S rRNA. It has affinity for free ribosomal 30S subunits but not for 70S ribosomes. This chain is Ribosome maturation factor RimM, found in Azoarcus sp. (strain BH72).